The primary structure comprises 515 residues: Putative asparagine synthetase [glutamine-hydrolyzing] 2 (515 aa).

The For GATase activity role is filled by Cys2. Residues 2 to 229 (CGINGIIRFG…ARQNLIFDLD (228 aa)) enclose the Glutamine amidotransferase type-2 domain. Residues 52 to 56 (RLAIL), 92 to 94 (NGE), and Asp114 each bind L-glutamine. ATP is bound by residues Ile306 and 378–379 (SG).

This sequence belongs to the asparagine synthetase family.

It catalyses the reaction L-aspartate + L-glutamine + ATP + H2O = L-asparagine + L-glutamate + AMP + diphosphate + H(+). Its pathway is amino-acid biosynthesis; L-asparagine biosynthesis; L-asparagine from L-aspartate (L-Gln route): step 1/1. The protein is Putative asparagine synthetase [glutamine-hydrolyzing] 2 of Methanocaldococcus jannaschii (strain ATCC 43067 / DSM 2661 / JAL-1 / JCM 10045 / NBRC 100440) (Methanococcus jannaschii).